A 134-amino-acid polypeptide reads, in one-letter code: UPF0102 protein SYNW1051 (134 aa).

It belongs to the UPF0102 family.

The sequence is that of UPF0102 protein SYNW1051 from Parasynechococcus marenigrum (strain WH8102).